The sequence spans 79 residues: MSFEVFEKLEAKVQQAIDTITLLQMEIEELKEQNGSLNHQVQQASGNSEALVRENQQLKEEQHVWQERLRALLGKMEEV.

Residues 4-78 (EVFEKLEAKV…LRALLGKMEE (75 aa)) adopt a coiled-coil conformation.

It belongs to the ZapB family. Homodimer. The ends of the coiled-coil dimer bind to each other, forming polymers. Interacts with FtsZ.

The protein resides in the cytoplasm. In terms of biological role, non-essential, abundant cell division factor that is required for proper Z-ring formation. It is recruited early to the divisome by direct interaction with FtsZ, stimulating Z-ring assembly and thereby promoting cell division earlier in the cell cycle. Its recruitment to the Z-ring requires functional FtsA or ZipA. In Erwinia tasmaniensis (strain DSM 17950 / CFBP 7177 / CIP 109463 / NCPPB 4357 / Et1/99), this protein is Cell division protein ZapB.